We begin with the raw amino-acid sequence, 260 residues long: tRNA pseudouridine synthase B (260 aa).

A substrate-binding site is contributed by His44. Asp49 serves as the catalytic Nucleophile. Substrate is bound by residues Tyr77, Tyr180, and Leu201.

This sequence belongs to the pseudouridine synthase TruB family. Type 1 subfamily.

It carries out the reaction uridine(55) in tRNA = pseudouridine(55) in tRNA. Its function is as follows. Responsible for synthesis of pseudouridine from uracil-55 in the psi GC loop of transfer RNAs. This is tRNA pseudouridine synthase B from Blochmanniella pennsylvanica (strain BPEN).